We begin with the raw amino-acid sequence, 172 residues long: Large ribosomal subunit protein uL10 (172 aa).

This sequence belongs to the universal ribosomal protein uL10 family. Part of the ribosomal stalk of the 50S ribosomal subunit. The N-terminus interacts with L11 and the large rRNA to form the base of the stalk. The C-terminus forms an elongated spine to which L12 dimers bind in a sequential fashion forming a multimeric L10(L12)X complex.

In terms of biological role, forms part of the ribosomal stalk, playing a central role in the interaction of the ribosome with GTP-bound translation factors. In Francisella tularensis subsp. mediasiatica (strain FSC147), this protein is Large ribosomal subunit protein uL10.